Consider the following 1393-residue polypeptide: DNA-directed RNA polymerase subunit beta' (1393 aa).

Residues cysteine 70, cysteine 72, cysteine 85, and cysteine 88 each coordinate Zn(2+). Positions 461, 463, and 465 each coordinate Mg(2+). Zn(2+)-binding residues include cysteine 815, cysteine 889, cysteine 896, and cysteine 899.

The protein belongs to the RNA polymerase beta' chain family. As to quaternary structure, the RNAP catalytic core consists of 2 alpha, 1 beta, 1 beta' and 1 omega subunit. When a sigma factor is associated with the core the holoenzyme is formed, which can initiate transcription. Mg(2+) is required as a cofactor. The cofactor is Zn(2+).

The catalysed reaction is RNA(n) + a ribonucleoside 5'-triphosphate = RNA(n+1) + diphosphate. In terms of biological role, DNA-dependent RNA polymerase catalyzes the transcription of DNA into RNA using the four ribonucleoside triphosphates as substrates. The polypeptide is DNA-directed RNA polymerase subunit beta' (Vesicomyosocius okutanii subsp. Calyptogena okutanii (strain HA)).